Here is a 65-residue protein sequence, read N- to C-terminus: Toxin Cbo5 (65 aa).

The LCN-type CS-alpha/beta domain maps to 2 to 65 (KDGYLVDKTG…QTWPLPNKSC (64 aa)). Intrachain disulfides connect Cys-12-Cys-65, Cys-16-Cys-41, Cys-25-Cys-46, and Cys-29-Cys-48.

Belongs to the long (4 C-C) scorpion toxin superfamily. Sodium channel inhibitor family. Beta subfamily. Expressed by the venom gland.

It is found in the secreted. In terms of biological role, a probable toxin that has no activity on the tested sodium channels (when tested at 200 nM) and is not toxic to mice, crickets or sweet water shrimps. It resembles Beta toxins that bind voltage-independently at site-4 of sodium channels and shift the voltage of activation toward more negative potentials, thereby affecting sodium channel activation and promoting spontaneous and repetitive firing. This Centruroides bonito (Scorpion) protein is Toxin Cbo5.